The following is a 555-amino-acid chain: 5'-nucleotidase-related protein (555 aa).

A signal peptide spans 1-25; sequence MKSLIGTLGLYCLFILTNNVVSSYG. 3 residues coordinate a divalent metal cation: Asp-38, His-40, and Asp-91. A glycan (N-linked (GlcNAc...) asparagine) is linked at Asn-105. Residue Asn-123 coordinates a divalent metal cation. Asn-198 is a glycosylation site (N-linked (GlcNAc...) asparagine). A divalent metal cation-binding residues include His-225 and His-249. The N-linked (GlcNAc...) asparagine glycan is linked to Asn-295. The AMP site is built by Arg-358, Arg-402, and Phe-421. A glycan (N-linked (GlcNAc...) asparagine) is linked at Asn-465. AMP-binding residues include Phe-505 and Asp-511.

The protein belongs to the 5'-nucleotidase family. It depends on Mg(2+) as a cofactor. Requires Mn(2+) as cofactor. As to expression, salivary gland (at protein level). Saliva (at protein level).

It is found in the secreted. It carries out the reaction a ribonucleoside 5'-triphosphate + 2 H2O = a ribonucleoside 5'-phosphate + 2 phosphate + 2 H(+). Its activity is regulated as follows. DEPC (2 mM), sodium fluoride (10 mM) and 4,4'-Diisothiocyano-2,2'-stilbenedisulfonic acid (DIDS, 100 uM) nearly completely abrogate activity. Concanavalin A enhances activity. Its function is as follows. Facilitates hematophagy by inhibiting ADP-dependent platelet aggregation and promoting disaggregation of ADP-stimulated platelets in the host. Cleaves adenosine triphosphate (ATP) and adenosine diphosphate (ADP) to adenosine monophosphate (AMP) and inorganic phosphate. Interacts with fibrinogen receptor integrin alpha-IIb/beta-3 (ITGA2B/ITGB3). The polypeptide is 5'-nucleotidase-related protein (Glossina morsitans morsitans (Savannah tsetse fly)).